The primary structure comprises 235 residues: Probable inactive serine protease 37 (235 aa).

The signal sequence occupies residues 1-19 (MKFTFCLTVLAGTFFSAHS). The region spanning 20–233 (SVQKDDPSPY…YVSWIESTTK (214 aa)) is the Peptidase S1 domain. 3 disulfide bridges follow: Cys-40-Cys-56, Cys-131-Cys-198, and Cys-163-Cys-177.

The protein belongs to the peptidase S1 family.

Its subcellular location is the cytoplasmic vesicle. It localises to the secretory vesicle. The protein localises to the acrosome. It is found in the secreted. Functionally, plays a role in male fertility. May have a role in sperm migration or binding to zona-intact eggs. Involved in the activation of the proacrosin/acrosin system. The polypeptide is Probable inactive serine protease 37 (Bos taurus (Bovine)).